The sequence spans 545 residues: ATP synthase subunit alpha (545 aa).

173-180 lines the ATP pocket; it reads GDRQTGKT.

It belongs to the ATPase alpha/beta chains family. F-type ATPases have 2 components, CF(1) - the catalytic core - and CF(0) - the membrane proton channel. CF(1) has five subunits: alpha(3), beta(3), gamma(1), delta(1), epsilon(1). CF(0) has three main subunits: a(1), b(2) and c(9-12). The alpha and beta chains form an alternating ring which encloses part of the gamma chain. CF(1) is attached to CF(0) by a central stalk formed by the gamma and epsilon chains, while a peripheral stalk is formed by the delta and b chains.

Its subcellular location is the cell membrane. The catalysed reaction is ATP + H2O + 4 H(+)(in) = ADP + phosphate + 5 H(+)(out). Its function is as follows. Produces ATP from ADP in the presence of a proton gradient across the membrane. The alpha chain is a regulatory subunit. The polypeptide is ATP synthase subunit alpha (Clavibacter sepedonicus (Clavibacter michiganensis subsp. sepedonicus)).